Consider the following 320-residue polypeptide: Probable trehalose-phosphate phosphatase C (320 aa).

It belongs to the trehalose phosphatase family. The cofactor is a divalent metal cation.

It catalyses the reaction alpha,alpha-trehalose 6-phosphate + H2O = alpha,alpha-trehalose + phosphate. It participates in glycan biosynthesis; trehalose biosynthesis. Functionally, removes the phosphate from trehalose 6-phosphate to produce free trehalose. Trehalose accumulation in plant may improve abiotic stress tolerance. The protein is Probable trehalose-phosphate phosphatase C (TPPC) of Arabidopsis thaliana (Mouse-ear cress).